The chain runs to 287 residues: Inositol-1-monophosphatase (287 aa).

4 residues coordinate Mg(2+): E79, D96, L98, and D99. Position 79 (E79) interacts with substrate. Residues 98–101, R195, and D224 each bind substrate; that span reads LDGT. Residue D224 coordinates Mg(2+).

Belongs to the inositol monophosphatase superfamily. The cofactor is Mg(2+).

The enzyme catalyses a myo-inositol phosphate + H2O = myo-inositol + phosphate. This Synechocystis sp. (strain ATCC 27184 / PCC 6803 / Kazusa) protein is Inositol-1-monophosphatase (suhB).